Here is a 591-residue protein sequence, read N- to C-terminus: L-fucose isomerase (591 aa).

Residues Glu-337 and Asp-361 each act as proton acceptor in the active site. Mn(2+) is bound by residues Glu-337, Asp-361, and His-528.

The protein belongs to the L-fucose isomerase family. Homohexamer. Mn(2+) is required as a cofactor.

Its subcellular location is the cytoplasm. The catalysed reaction is L-fucose = L-fuculose. The protein operates within carbohydrate degradation; L-fucose degradation; L-lactaldehyde and glycerone phosphate from L-fucose: step 1/3. Converts the aldose L-fucose into the corresponding ketose L-fuculose. This is L-fucose isomerase from Klebsiella pneumoniae (strain 342).